A 40-amino-acid polypeptide reads, in one-letter code: uncharacterized protein (40 aa).

This is an uncharacterized protein from Dictyostelium discoideum (Social amoeba).